The chain runs to 213 residues: Probable thymidylate kinase 2 (213 aa).

An ATP-binding site is contributed by glycine 10–serine 17.

It belongs to the thymidylate kinase family.

The catalysed reaction is dTMP + ATP = dTDP + ADP. This chain is Probable thymidylate kinase 2 (tmk2), found in Saccharolobus solfataricus (strain ATCC 35092 / DSM 1617 / JCM 11322 / P2) (Sulfolobus solfataricus).